The following is a 254-amino-acid chain: Phosphoribosylaminoimidazole-succinocarboxamide synthase (254 aa).

Belongs to the SAICAR synthetase family.

The catalysed reaction is 5-amino-1-(5-phospho-D-ribosyl)imidazole-4-carboxylate + L-aspartate + ATP = (2S)-2-[5-amino-1-(5-phospho-beta-D-ribosyl)imidazole-4-carboxamido]succinate + ADP + phosphate + 2 H(+). It participates in purine metabolism; IMP biosynthesis via de novo pathway; 5-amino-1-(5-phospho-D-ribosyl)imidazole-4-carboxamide from 5-amino-1-(5-phospho-D-ribosyl)imidazole-4-carboxylate: step 1/2. The protein is Phosphoribosylaminoimidazole-succinocarboxamide synthase of Rhodospirillum centenum (strain ATCC 51521 / SW).